Reading from the N-terminus, the 238-residue chain is Pyridoxine 5'-phosphate synthase (238 aa).

Asn-6 contributes to the 3-amino-2-oxopropyl phosphate binding site. 8 to 9 is a binding site for 1-deoxy-D-xylulose 5-phosphate; it reads DH. Residue Arg-17 participates in 3-amino-2-oxopropyl phosphate binding. Residue His-42 is the Proton acceptor of the active site. Residues Arg-44 and His-49 each coordinate 1-deoxy-D-xylulose 5-phosphate. Glu-69 serves as the catalytic Proton acceptor. 1-deoxy-D-xylulose 5-phosphate is bound at residue Thr-99. The active-site Proton donor is the His-186. 3-amino-2-oxopropyl phosphate contacts are provided by residues Gly-187 and 208–209; that span reads GH.

Belongs to the PNP synthase family. As to quaternary structure, homooctamer; tetramer of dimers.

The protein resides in the cytoplasm. It carries out the reaction 3-amino-2-oxopropyl phosphate + 1-deoxy-D-xylulose 5-phosphate = pyridoxine 5'-phosphate + phosphate + 2 H2O + H(+). It functions in the pathway cofactor biosynthesis; pyridoxine 5'-phosphate biosynthesis; pyridoxine 5'-phosphate from D-erythrose 4-phosphate: step 5/5. In terms of biological role, catalyzes the complicated ring closure reaction between the two acyclic compounds 1-deoxy-D-xylulose-5-phosphate (DXP) and 3-amino-2-oxopropyl phosphate (1-amino-acetone-3-phosphate or AAP) to form pyridoxine 5'-phosphate (PNP) and inorganic phosphate. The protein is Pyridoxine 5'-phosphate synthase of Anaplasma marginale (strain St. Maries).